A 475-amino-acid polypeptide reads, in one-letter code: Sulfate adenylyltransferase subunit 1 (475 aa).

Residues 25 to 239 (KSLLRFLTCG…EVLETVEIQR (215 aa)) form the tr-type G domain. The G1 stretch occupies residues 34 to 41 (GSVDDGKS). 34-41 (GSVDDGKS) lines the GTP pocket. Positions 92-96 (GITID) are G2. The interval 113-116 (DTPG) is G3. GTP is bound by residues 113 to 117 (DTPGH) and 168 to 171 (NKMD). The G4 stretch occupies residues 168 to 171 (NKMD). Positions 206–208 (SAL) are G5.

This sequence belongs to the TRAFAC class translation factor GTPase superfamily. Classic translation factor GTPase family. CysN/NodQ subfamily. In terms of assembly, heterodimer composed of CysD, the smaller subunit, and CysN.

The catalysed reaction is sulfate + ATP + H(+) = adenosine 5'-phosphosulfate + diphosphate. Its pathway is sulfur metabolism; hydrogen sulfide biosynthesis; sulfite from sulfate: step 1/3. Its function is as follows. With CysD forms the ATP sulfurylase (ATPS) that catalyzes the adenylation of sulfate producing adenosine 5'-phosphosulfate (APS) and diphosphate, the first enzymatic step in sulfur assimilation pathway. APS synthesis involves the formation of a high-energy phosphoric-sulfuric acid anhydride bond driven by GTP hydrolysis by CysN coupled to ATP hydrolysis by CysD. The chain is Sulfate adenylyltransferase subunit 1 from Shigella dysenteriae serotype 1 (strain Sd197).